The sequence spans 177 residues: ADP-ribosylation factor-like protein 17 (177 aa).

Glycine 2 carries the N-myristoyl glycine lipid modification. GTP contacts are provided by residues 24–31, 67–71, and 125–128; these read SLDTAGKT, DVGSH, and LPHS.

It belongs to the small GTPase superfamily. Arf family.

The protein localises to the golgi apparatus. GTP-binding protein that functions as an allosteric activator of the cholera toxin catalytic subunit, an ADP-ribosyltransferase. Involved in protein trafficking; may modulate vesicle budding and uncoating within the Golgi apparatus. This chain is ADP-ribosylation factor-like protein 17 (ARL17A), found in Homo sapiens (Human).